We begin with the raw amino-acid sequence, 138 residues long: DNA-directed RNA polymerase subunit omega (138 aa).

Positions 101–138 (AEDDDTLEADGLTIHDGADSDLDLSDDAGQDTDEADED) are disordered. Residues 119-138 (DSDLDLSDDAGQDTDEADED) are compositionally biased toward acidic residues.

It belongs to the RNA polymerase subunit omega family. As to quaternary structure, the RNAP catalytic core consists of 2 alpha, 1 beta, 1 beta' and 1 omega subunit. When a sigma factor is associated with the core the holoenzyme is formed, which can initiate transcription.

The catalysed reaction is RNA(n) + a ribonucleoside 5'-triphosphate = RNA(n+1) + diphosphate. Functionally, promotes RNA polymerase assembly. Latches the N- and C-terminal regions of the beta' subunit thereby facilitating its interaction with the beta and alpha subunits. The chain is DNA-directed RNA polymerase subunit omega from Rhodospirillum rubrum (strain ATCC 11170 / ATH 1.1.1 / DSM 467 / LMG 4362 / NCIMB 8255 / S1).